Consider the following 157-residue polypeptide: Small ribosomal subunit protein uS7 (157 aa).

Belongs to the universal ribosomal protein uS7 family. Part of the 30S ribosomal subunit. Contacts proteins S9 and S11.

Functionally, one of the primary rRNA binding proteins, it binds directly to 16S rRNA where it nucleates assembly of the head domain of the 30S subunit. Is located at the subunit interface close to the decoding center, probably blocks exit of the E-site tRNA. The protein is Small ribosomal subunit protein uS7 of Rhodopirellula baltica (strain DSM 10527 / NCIMB 13988 / SH1).